Here is a 192-residue protein sequence, read N- to C-terminus: UPF0301 protein Bphyt_0868 (192 aa).

It belongs to the UPF0301 (AlgH) family.

The chain is UPF0301 protein Bphyt_0868 from Paraburkholderia phytofirmans (strain DSM 17436 / LMG 22146 / PsJN) (Burkholderia phytofirmans).